Reading from the N-terminus, the 177-residue chain is Large ribosomal subunit protein uL6 (177 aa).

It belongs to the universal ribosomal protein uL6 family. As to quaternary structure, part of the 50S ribosomal subunit.

Its function is as follows. This protein binds to the 23S rRNA, and is important in its secondary structure. It is located near the subunit interface in the base of the L7/L12 stalk, and near the tRNA binding site of the peptidyltransferase center. This is Large ribosomal subunit protein uL6 from Methylorubrum populi (strain ATCC BAA-705 / NCIMB 13946 / BJ001) (Methylobacterium populi).